The chain runs to 209 residues: Large ribosomal subunit protein uL3 (209 aa).

It belongs to the universal ribosomal protein uL3 family. As to quaternary structure, part of the 50S ribosomal subunit. Forms a cluster with proteins L14 and L19.

Its function is as follows. One of the primary rRNA binding proteins, it binds directly near the 3'-end of the 23S rRNA, where it nucleates assembly of the 50S subunit. This is Large ribosomal subunit protein uL3 from Desulfotalea psychrophila (strain LSv54 / DSM 12343).